The following is a 251-amino-acid chain: Indole-3-glycerol phosphate synthase (251 aa).

A compositionally biased stretch (polar residues) spans 1 to 12 (MDDSSSLASPVQ). Residues 1 to 27 (MDDSSSLASPVQSILAAARRRDPPTRR) are disordered.

Belongs to the TrpC family.

It catalyses the reaction 1-(2-carboxyphenylamino)-1-deoxy-D-ribulose 5-phosphate + H(+) = (1S,2R)-1-C-(indol-3-yl)glycerol 3-phosphate + CO2 + H2O. It participates in amino-acid biosynthesis; L-tryptophan biosynthesis; L-tryptophan from chorismate: step 4/5. In Halobacterium salinarum (strain ATCC 700922 / JCM 11081 / NRC-1) (Halobacterium halobium), this protein is Indole-3-glycerol phosphate synthase.